A 158-amino-acid polypeptide reads, in one-letter code: 6,7-dimethyl-8-ribityllumazine synthase (158 aa).

5-amino-6-(D-ribitylamino)uracil-binding positions include F22, 57–59, and 84–86; these read AYE and TVI. A (2S)-2-hydroxy-3-oxobutyl phosphate-binding site is contributed by 89–90; it reads GT. The Proton donor role is filled by H92. F117 lines the 5-amino-6-(D-ribitylamino)uracil pocket. Residue R131 participates in (2S)-2-hydroxy-3-oxobutyl phosphate binding.

This sequence belongs to the DMRL synthase family. In terms of assembly, forms an icosahedral capsid composed of 60 subunits, arranged as a dodecamer of pentamers.

It carries out the reaction (2S)-2-hydroxy-3-oxobutyl phosphate + 5-amino-6-(D-ribitylamino)uracil = 6,7-dimethyl-8-(1-D-ribityl)lumazine + phosphate + 2 H2O + H(+). It functions in the pathway cofactor biosynthesis; riboflavin biosynthesis; riboflavin from 2-hydroxy-3-oxobutyl phosphate and 5-amino-6-(D-ribitylamino)uracil: step 1/2. Functionally, catalyzes the formation of 6,7-dimethyl-8-ribityllumazine by condensation of 5-amino-6-(D-ribitylamino)uracil with 3,4-dihydroxy-2-butanone 4-phosphate. This is the penultimate step in the biosynthesis of riboflavin. This chain is 6,7-dimethyl-8-ribityllumazine synthase, found in Pectobacterium atrosepticum (strain SCRI 1043 / ATCC BAA-672) (Erwinia carotovora subsp. atroseptica).